A 326-amino-acid chain; its full sequence is 4-hydroxythreonine-4-phosphate dehydrogenase (326 aa).

Residues histidine 132 and threonine 133 each coordinate substrate. 3 residues coordinate a divalent metal cation: histidine 162, histidine 207, and histidine 262. Residues lysine 270, asparagine 279, and arginine 288 each contribute to the substrate site.

It belongs to the PdxA family. As to quaternary structure, homodimer. Requires Zn(2+) as cofactor. The cofactor is Mg(2+). Co(2+) serves as cofactor.

The protein localises to the cytoplasm. It catalyses the reaction 4-(phosphooxy)-L-threonine + NAD(+) = 3-amino-2-oxopropyl phosphate + CO2 + NADH. It functions in the pathway cofactor biosynthesis; pyridoxine 5'-phosphate biosynthesis; pyridoxine 5'-phosphate from D-erythrose 4-phosphate: step 4/5. In terms of biological role, catalyzes the NAD(P)-dependent oxidation of 4-(phosphooxy)-L-threonine (HTP) into 2-amino-3-oxo-4-(phosphooxy)butyric acid which spontaneously decarboxylates to form 3-amino-2-oxopropyl phosphate (AHAP). This is 4-hydroxythreonine-4-phosphate dehydrogenase from Ruegeria sp. (strain TM1040) (Silicibacter sp.).